A 475-amino-acid polypeptide reads, in one-letter code: ATP synthase subunit beta (475 aa).

152-159 (GGAGVGKT) contacts ATP.

The protein belongs to the ATPase alpha/beta chains family. In terms of assembly, F-type ATPases have 2 components, CF(1) - the catalytic core - and CF(0) - the membrane proton channel. CF(1) has five subunits: alpha(3), beta(3), gamma(1), delta(1), epsilon(1). CF(0) has four main subunits: a(1), b(1), b'(1) and c(9-12).

Its subcellular location is the cell inner membrane. It catalyses the reaction ATP + H2O + 4 H(+)(in) = ADP + phosphate + 5 H(+)(out). Produces ATP from ADP in the presence of a proton gradient across the membrane. The catalytic sites are hosted primarily by the beta subunits. The polypeptide is ATP synthase subunit beta (Cereibacter sphaeroides (strain ATCC 17025 / ATH 2.4.3) (Rhodobacter sphaeroides)).